The chain runs to 410 residues: Riboflavin biosynthesis protein RibBA (410 aa).

Positions 1–205 are DHBP synthase; that stretch reads MENKRIDTIE…IKDLVAFQMR (205 aa). Residues 30–31, Asp35, 144–148, and Glu168 contribute to the D-ribulose 5-phosphate site; these read RE and RVGHT. Residue Glu31 participates in Mg(2+) binding. His147 serves as a coordination point for Mg(2+). The tract at residues 206-410 is GTP cyclohydrolase II; the sequence is RSKLVQRAVE…ISCSCGSGNH (205 aa). 256–260 is a binding site for GTP; it reads RVHSQ. Zn(2+) is bound by residues Cys261, Cys272, and Cys274. Residues Gln277, 299 to 301, and Thr321 contribute to the GTP site; that span reads EGR. Asp333 serves as the catalytic Proton acceptor; for GTP cyclohydrolase activity. Arg335 functions as the Nucleophile; for GTP cyclohydrolase activity in the catalytic mechanism. Residues Thr356 and Lys361 each coordinate GTP.

The protein in the N-terminal section; belongs to the DHBP synthase family. This sequence in the C-terminal section; belongs to the GTP cyclohydrolase II family. The cofactor is Mg(2+). It depends on Mn(2+) as a cofactor. Zn(2+) serves as cofactor.

The enzyme catalyses D-ribulose 5-phosphate = (2S)-2-hydroxy-3-oxobutyl phosphate + formate + H(+). It carries out the reaction GTP + 4 H2O = 2,5-diamino-6-hydroxy-4-(5-phosphoribosylamino)-pyrimidine + formate + 2 phosphate + 3 H(+). It functions in the pathway cofactor biosynthesis; riboflavin biosynthesis; 2-hydroxy-3-oxobutyl phosphate from D-ribulose 5-phosphate: step 1/1. The protein operates within cofactor biosynthesis; riboflavin biosynthesis; 5-amino-6-(D-ribitylamino)uracil from GTP: step 1/4. In terms of biological role, catalyzes the conversion of D-ribulose 5-phosphate to formate and 3,4-dihydroxy-2-butanone 4-phosphate. Its function is as follows. Catalyzes the conversion of GTP to 2,5-diamino-6-ribosylamino-4(3H)-pyrimidinone 5'-phosphate (DARP), formate and pyrophosphate. This chain is Riboflavin biosynthesis protein RibBA, found in Chlorobium phaeovibrioides (strain DSM 265 / 1930) (Prosthecochloris vibrioformis (strain DSM 265)).